Reading from the N-terminus, the 522-residue chain is Maturase K (522 aa).

Belongs to the intron maturase 2 family. MatK subfamily.

The protein resides in the plastid. It localises to the chloroplast. Usually encoded in the trnK tRNA gene intron. Probably assists in splicing its own and other chloroplast group II introns. The chain is Maturase K from Sapindus saponaria (Soapberry).